The chain runs to 183 residues: Hypoxanthine-guanine phosphoribosyltransferase (183 aa).

Diphosphate-binding residues include Arg47 and Gly48. Residues Glu103 and Asp104 each contribute to the Mg(2+) site. Asp107 serves as the catalytic Proton acceptor. GMP is bound by residues Lys134, 155–156 (FV), and Asp162. Arg168 is a binding site for diphosphate.

This sequence belongs to the purine/pyrimidine phosphoribosyltransferase family. Mg(2+) serves as cofactor.

The protein resides in the cytoplasm. The catalysed reaction is IMP + diphosphate = hypoxanthine + 5-phospho-alpha-D-ribose 1-diphosphate. It catalyses the reaction GMP + diphosphate = guanine + 5-phospho-alpha-D-ribose 1-diphosphate. It participates in purine metabolism; IMP biosynthesis via salvage pathway; IMP from hypoxanthine: step 1/1. It functions in the pathway purine metabolism; GMP biosynthesis via salvage pathway; GMP from guanine: step 1/1. Purine salvage pathway enzyme that catalyzes the transfer of the ribosyl-5-phosphate group from 5-phospho-alpha-D-ribose 1-diphosphate (PRPP) to the N9 position of the 6-oxopurines hypoxanthine and guanine to form the corresponding ribonucleotides IMP (inosine 5'-monophosphate) and GMP (guanosine 5'-monophosphate), with the release of PPi. This chain is Hypoxanthine-guanine phosphoribosyltransferase (hpt), found in Lactococcus lactis subsp. lactis (strain IL1403) (Streptococcus lactis).